Consider the following 1367-residue polypeptide: DNA polymerase III PolC-type (1367 aa).

An Exonuclease domain is found at 358 to 513 (FVVLDFETTG…DDARVTAQVF (156 aa)).

This sequence belongs to the DNA polymerase type-C family. PolC subfamily.

The protein localises to the cytoplasm. It catalyses the reaction DNA(n) + a 2'-deoxyribonucleoside 5'-triphosphate = DNA(n+1) + diphosphate. Required for replicative DNA synthesis. This DNA polymerase also exhibits 3' to 5' exonuclease activity. The polypeptide is DNA polymerase III PolC-type (Thermotoga petrophila (strain ATCC BAA-488 / DSM 13995 / JCM 10881 / RKU-1)).